The chain runs to 290 residues: Mitochondrial dicarboxylate carrier (290 aa).

Solcar repeat units lie at residues 6-90 (TKRL…VKKQ), 101-188 (QKAL…IKQT), and 197-281 (DNLQ…LRLK). Helical transmembrane passes span 12-32 (WYFG…LDLL), 65-84 (GVSA…FGIY), and 103-123 (ALLA…GDLV). N6-acetyllysine is present on K159. Helical transmembrane passes span 163-182 (GATM…LSFY), 203-223 (FASS…LDVM), and 256-276 (GFIP…IFFE).

This sequence belongs to the mitochondrial carrier (TC 2.A.29) family.

Its subcellular location is the mitochondrion inner membrane. The enzyme catalyses (S)-malate(in) + phosphate(out) = (S)-malate(out) + phosphate(in). It catalyses the reaction malonate(out) + (S)-malate(in) = malonate(in) + (S)-malate(out). The catalysed reaction is (S)-malate(in) + succinate(out) = (S)-malate(out) + succinate(in). It carries out the reaction (S)-malate(in) + sulfate(out) = (S)-malate(out) + sulfate(in). The enzyme catalyses 2 thiosulfate(out) + (S)-malate(in) = 2 thiosulfate(in) + (S)-malate(out). It catalyses the reaction malonate(out) + phosphate(in) = malonate(in) + phosphate(out). The catalysed reaction is succinate(out) + phosphate(in) = succinate(in) + phosphate(out). It carries out the reaction sulfate(out) + phosphate(in) = sulfate(in) + phosphate(out). The enzyme catalyses 2 thiosulfate(out) + phosphate(in) = 2 thiosulfate(in) + phosphate(out). It catalyses the reaction malonate(out) + succinate(in) = malonate(in) + succinate(out). Its function is as follows. Catalyzes the electroneutral exchange or flux of physiologically important metabolites such as dicarboxylates (malonate, malate, succinate), inorganic sulfur-containing anions, and phosphate, across mitochondrial inner membrane. Plays an important role in gluconeogenesis, fatty acid metabolism, urea synthesis, and sulfur metabolism, by supplying the substrates for the different metabolic processes. This is Mitochondrial dicarboxylate carrier from Caenorhabditis elegans.